A 192-amino-acid polypeptide reads, in one-letter code: Xanthine phosphoribosyltransferase (192 aa).

Xanthine contacts are provided by Leu-20 and Asn-27. 128–132 (ANGQA) is a 5-phospho-alpha-D-ribose 1-diphosphate binding site. Lys-156 is a binding site for xanthine.

Belongs to the purine/pyrimidine phosphoribosyltransferase family. Xpt subfamily. In terms of assembly, homodimer.

Its subcellular location is the cytoplasm. The enzyme catalyses XMP + diphosphate = xanthine + 5-phospho-alpha-D-ribose 1-diphosphate. Its pathway is purine metabolism; XMP biosynthesis via salvage pathway; XMP from xanthine: step 1/1. Functionally, converts the preformed base xanthine, a product of nucleic acid breakdown, to xanthosine 5'-monophosphate (XMP), so it can be reused for RNA or DNA synthesis. This chain is Xanthine phosphoribosyltransferase, found in Listeria innocua serovar 6a (strain ATCC BAA-680 / CLIP 11262).